Consider the following 274-residue polypeptide: Large ribosomal subunit protein uL2cz/uL2cy (274 aa).

Residues 1 to 15 (MAINLYKTSTPSTRN) are compositionally biased toward polar residues. Disordered regions lie at residues 1-22 (MAIN…DSQV) and 225-274 (PVDH…RRSK).

It belongs to the universal ribosomal protein uL2 family. Part of the 50S ribosomal subunit.

The protein localises to the plastid. It localises to the chloroplast. This is Large ribosomal subunit protein uL2cz/uL2cy (rpl2-A) from Lobularia maritima (Sweet alyssum).